A 303-amino-acid chain; its full sequence is UDP-N-acetylenolpyruvoylglucosamine reductase (303 aa).

The region spanning 32–212 is the FAD-binding PCMH-type domain; that stretch reads IGGKADLFLN…EQETKEYLAK (181 aa). Arginine 176 is a catalytic residue. Serine 226 functions as the Proton donor in the catalytic mechanism. The active site involves glutamate 296.

The protein belongs to the MurB family. FAD is required as a cofactor.

The protein resides in the cytoplasm. It carries out the reaction UDP-N-acetyl-alpha-D-muramate + NADP(+) = UDP-N-acetyl-3-O-(1-carboxyvinyl)-alpha-D-glucosamine + NADPH + H(+). It participates in cell wall biogenesis; peptidoglycan biosynthesis. Its function is as follows. Cell wall formation. The protein is UDP-N-acetylenolpyruvoylglucosamine reductase of Desulforamulus reducens (strain ATCC BAA-1160 / DSM 100696 / MI-1) (Desulfotomaculum reducens).